Reading from the N-terminus, the 381-residue chain is MIIHVFTSESVSEGHPDKIADQISDAILDAILAKDPLARVACETFVKTGMVLVGGEITTSAWVDVETITREVIKDIGYNSSDMGFDWASCSVLSAIGKQSLDIAQGVDNRETKILGAGDQGLMFGYASRETDVCMPAPIAYSHRLMARQAELRKNNKLPWLRPDGKCQLTLKYDQGKPVAIDTIVFSTQHAPEISHKDLVEAVREEIIKPVLPEEWLSAATRYYINPTGRFVIGGPLGDCGLTGRKIIVDTYGGMARHGGGCFSGKDPSKVDRSGAYAARHVAKNLVAAGIAEKCEIQVSYAIGVAEPTSISVDTFGTGHLRNNVIIDLIKTHFDLTPQGIIDHHDLFSPIYRQTAAYGHYGRDGLPWERLDKVAALAKAL.

Histidine 15 serves as a coordination point for ATP. Aspartate 17 is a Mg(2+) binding site. Glutamate 43 contacts K(+). L-methionine contacts are provided by glutamate 56 and glutamine 99. Residues glutamine 99–asparagine 109 form a flexible loop region. ATP is bound by residues aspartate 164–lysine 166, arginine 230–phenylalanine 231, aspartate 239, arginine 245–lysine 246, and lysine 266. Aspartate 239 is a binding site for L-methionine. Lysine 270 is a binding site for L-methionine.

It belongs to the AdoMet synthase family. Homotetramer; dimer of dimers. The cofactor is Mg(2+). Requires K(+) as cofactor.

It localises to the cytoplasm. The catalysed reaction is L-methionine + ATP + H2O = S-adenosyl-L-methionine + phosphate + diphosphate. Its pathway is amino-acid biosynthesis; S-adenosyl-L-methionine biosynthesis; S-adenosyl-L-methionine from L-methionine: step 1/1. Catalyzes the formation of S-adenosylmethionine (AdoMet) from methionine and ATP. The overall synthetic reaction is composed of two sequential steps, AdoMet formation and the subsequent tripolyphosphate hydrolysis which occurs prior to release of AdoMet from the enzyme. The sequence is that of S-adenosylmethionine synthase from Legionella jeonii.